We begin with the raw amino-acid sequence, 332 residues long: Casein kinase I isoform 2 (332 aa).

The Protein kinase domain occupies Phe-11–Phe-282. Residues Ile-17–Ile-25 and Lys-40 each bind ATP. Asp-133 functions as the Proton acceptor in the catalytic mechanism. The segment at Glu-306 to Val-332 is disordered. Low complexity predominate over residues Gln-311–Gln-320. Over residues Arg-322 to Val-332 the composition is skewed to basic and acidic residues.

The protein belongs to the protein kinase superfamily. Ser/Thr protein kinase family. Mg(2+) serves as cofactor.

The enzyme catalyses L-seryl-[protein] + ATP = O-phospho-L-seryl-[protein] + ADP + H(+). The catalysed reaction is L-threonyl-[protein] + ATP = O-phospho-L-threonyl-[protein] + ADP + H(+). Its function is as follows. Serine/threonine protein kinase. May phosphorylate ZC3H11 during unstressed conditions, leading to proteasome-dependent degradation of ZC3H11. The polypeptide is Casein kinase I isoform 2 (Trypanosoma brucei brucei).